A 562-amino-acid polypeptide reads, in one-letter code: Undecaprenyl phosphate-alpha-4-amino-4-deoxy-L-arabinose arabinosyl transferase (562 aa).

Transmembrane regions (helical) follow at residues 14–34 (IKFSITIIAFILLYYLIPLNY), 91–111 (FSVRFGSFLFTLFSANLIYLF), 120–140 (ILSLNSVIIFLSILLVYIIGT), 142–162 (SVLDSIISFWINLSMISFWLA), 186–206 (FITKGFISLLIPFISIFIWLF), 215–235 (TIIHCFFSLLISILIIFPWIY), 267–287 (PFWYYFPIFIIGCLPWSGFLF), 302–322 (IEFYLLLWIIVQFCFFSISKG), 324–344 (LPTYILPCFFPLSILIAKNIE), 354–374 (LLKINSIINTIVGSTLLIFII), 395–415 (LILCIFSIFVWIFLNLCIIFN), and 425–445 (LSIIGIAFLFGLYVPEKIIYA).

The protein belongs to the glycosyltransferase 83 family.

The protein resides in the cell inner membrane. The catalysed reaction is 4-amino-4-deoxy-alpha-L-arabinopyranosyl di-trans,octa-cis-undecaprenyl phosphate + lipid IVA = lipid IIA + di-trans,octa-cis-undecaprenyl phosphate.. It participates in lipopolysaccharide metabolism; 4-amino-4-deoxy-beta-L-arabinose-lipid A biosynthesis. In terms of biological role, catalyzes the transfer of the L-Ara4N moiety of the glycolipid undecaprenyl phosphate-alpha-L-Ara4N to lipid A. The modified arabinose is attached to lipid A and is required for resistance to polymyxin and cationic antimicrobial peptides. The polypeptide is Undecaprenyl phosphate-alpha-4-amino-4-deoxy-L-arabinose arabinosyl transferase (Wigglesworthia glossinidia brevipalpis).